Consider the following 105-residue polypeptide: Large ribosomal subunit protein uL24 (105 aa).

This sequence belongs to the universal ribosomal protein uL24 family. As to quaternary structure, part of the 50S ribosomal subunit.

Functionally, one of two assembly initiator proteins, it binds directly to the 5'-end of the 23S rRNA, where it nucleates assembly of the 50S subunit. One of the proteins that surrounds the polypeptide exit tunnel on the outside of the subunit. This is Large ribosomal subunit protein uL24 from Staphylococcus haemolyticus (strain JCSC1435).